The primary structure comprises 145 residues: MFKEFKEFIARGNVIDLAVGIIIGAAFTAIVNSLVADLINPIIGLLTGGTDFSGHYLVLKGEVPPGASLQVARDSGASVFAYGAFLSAVINFLIIAWAVFLLVKAVNRVQSAASRQKEAEAEAAAGPTQEELLTEIRDELRARRT.

Helical transmembrane passes span 14 to 34 and 83 to 103; these read VIDL…VNSL and GAFL…FLLV.

Belongs to the MscL family. Homopentamer.

It localises to the cell inner membrane. Its function is as follows. Channel that opens in response to stretch forces in the membrane lipid bilayer. May participate in the regulation of osmotic pressure changes within the cell. This is Large-conductance mechanosensitive channel from Paracoccus denitrificans (strain Pd 1222).